We begin with the raw amino-acid sequence, 683 residues long: Leucine-rich repeat and calponin homology domain-containing protein 4 (683 aa).

Residues methionine 1–alanine 18 show a composition bias toward low complexity. The interval methionine 1–alanine 34 is disordered. LRR repeat units lie at residues alanine 41–serine 64, leucine 67–leucine 90, serine 92–leucine 113, threonine 114–leucine 136, leucine 138–leucine 158, glycine 159–leucine 181, serine 182–leucine 204, leucine 206–leucine 226, and arginine 227–glycine 250. The interval alanine 268 to histidine 292 is disordered. Serine 279, serine 281, serine 304, serine 307, serine 309, and serine 313 each carry phosphoserine. Disordered stretches follow at residues phenylalanine 326 to proline 436 and serine 449 to aspartate 539. Composition is skewed to basic and acidic residues over residues glutamate 330–glycine 345, isoleucine 357–proline 376, and glycine 384–glutamine 418. Serine 432 and serine 457 each carry phosphoserine. A compositionally biased stretch (polar residues) spans serine 449–serine 460. 2 stretches are compositionally biased toward low complexity: residues serine 461 to glutamine 481 and serine 511 to serine 524. A phosphoserine mark is found at serine 511, serine 513, serine 517, serine 521, and serine 589. Positions valine 534–glycine 647 constitute a Calponin-homology (CH) domain. Residues leucine 653–leucine 673 traverse the membrane as a helical segment.

Its subcellular location is the cell membrane. Its function is as follows. Accessory protein that regulates signaling by multiple TLRs, acting as a broad-spanning regulator of the innate immune response. In macrophages, binds LPS and promotes proper docking of LPS in lipid raft membrane. May be required for lipid raft maintenance. The chain is Leucine-rich repeat and calponin homology domain-containing protein 4 from Homo sapiens (Human).